The primary structure comprises 506 residues: Maturase K (506 aa).

It belongs to the intron maturase 2 family. MatK subfamily.

Its subcellular location is the plastid. The protein resides in the chloroplast. In terms of biological role, usually encoded in the trnK tRNA gene intron. Probably assists in splicing its own and other chloroplast group II introns. This chain is Maturase K, found in Trifolium hybridum (Alsike clover).